A 438-amino-acid chain; its full sequence is Na(+)/H(+) antiporter NhaA (438 aa).

Transmembrane regions (helical) follow at residues 23 to 43, 62 to 82, 104 to 124, 133 to 153, 162 to 182, 185 to 205, 221 to 241, 302 to 322, 337 to 357, 372 to 392, and 410 to 430; these read FGGI…NSFL, FFIG…LFFL, SFPV…YFFL, GFGI…MLLG, VFLI…IALF, TNLK…LAVL, VLLW…AVIL, FLAP…NAGV, LGVI…ITFI, WWHI…SMFI, and IAIL…LFAL.

Belongs to the NhaA Na(+)/H(+) (TC 2.A.33) antiporter family.

It localises to the cell inner membrane. It carries out the reaction Na(+)(in) + 2 H(+)(out) = Na(+)(out) + 2 H(+)(in). Its function is as follows. Na(+)/H(+) antiporter that extrudes sodium in exchange for external protons. The chain is Na(+)/H(+) antiporter NhaA from Helicobacter pylori (strain HPAG1).